An 822-amino-acid polypeptide reads, in one-letter code: Integrator complex assembly factor BRAT1 (822 aa).

The interval leucine 100–asparagine 200 is required for interaction with NDFIP1. HEAT repeat units follow at residues leucine 495 to tryptophan 531 and serine 544 to glycine 576. Serine 743 is subject to Phosphoserine. A BRAT1-like motif motif is present at residues aspartate 820–tyrosine 822. Cysteine 821 contributes to the Zn(2+) binding site.

Belongs to the BRAT1 family. Part of the multiprotein complex composed of BRAT1, WDR73, as well as integrator complex subunits INTS9 and INTS11. Interacts with BRCA1 and ATM. Interacts with MTOR and RPTOR. Interacts with NDFIP1. Interacts with SMC1A and PRKDC. Ubiquitinated by NEDD4, NEDD4L and ITCH; mono- and polyubiquitinated forms are detected. As to expression, high levels detected in the cortex and much lower levels detected in the cerebellum, spinal cord and lung (at protein level).

It is found in the nucleus. The protein resides in the cytoplasm. Functionally, component of a multiprotein complex required for the assembly of the RNA endonuclease module of the integrator complex. Associates with INTS9 and INTS11 in the cytoplasm and blocks the active site of INTS11 to inhibit the endonuclease activity of INTS11 before formation of the full integrator complex. Following dissociation of WDR73 of the complex, BRAT1 facilitates the nuclear import of the INTS9-INTS11 heterodimer. In the nucleus, INTS4 is integrated to the INTS9-INTS11 heterodimer and BRAT1 is released from the mature RNA endonuclease module by inositol hexakisphosphate (InsP6). BRAT1 is also involved in DNA damage response; activates kinases ATM, SMC1A and PRKDC by modulating their phosphorylation status following ionizing radiation (IR) stress. Plays a role in regulating mitochondrial function and cell proliferation. Required for protein stability of MTOR and MTOR-related proteins, and cell cycle progress by growth factors. This chain is Integrator complex assembly factor BRAT1, found in Mus musculus (Mouse).